The chain runs to 766 residues: Ribonuclease Z, mitochondrial (766 aa).

Residues 1–25 constitute a mitochondrion transit peptide; that stretch reads MYLVKSAGSPIYRTLRTLTTSNLMA.

It belongs to the RNase Z family. Homodimer. Requires Zn(2+) as cofactor.

The protein localises to the nucleus. It localises to the mitochondrion. It carries out the reaction Endonucleolytic cleavage of RNA, removing extra 3' nucleotides from tRNA precursor, generating 3' termini of tRNAs. A 3'-hydroxy group is left at the tRNA terminus and a 5'-phosphoryl group is left at the trailer molecule.. Zinc phosphodiesterase, which displays some tRNA 3'-processing endonuclease activity of nuclear and mitochondrial pre-tRNA. Probably involved in tRNA maturation, by removing a 3'-trailer from precursor tRNA. May participate in tRNA processing in the developing embryo. This Drosophila melanogaster (Fruit fly) protein is Ribonuclease Z, mitochondrial.